Here is a 351-residue protein sequence, read N- to C-terminus: Photosystem II D2 protein (351 aa).

Residues 39–59 (CSYLALGAWFTGTTFVTSWYT) traverse the membrane as a helical segment. H116 contributes to the chlorophyll a binding site. A helical membrane pass occupies residues 123–139 (GFCLRQFEIARLVGLRP). 2 residues coordinate pheophytin a: Q128 and N141. A helical membrane pass occupies residues 151-164 (VFVSVFLLYPLGQA). H196 lines the chlorophyll a pocket. A helical membrane pass occupies residues 206-226 (GALLCAIHGATVQNTLFEDGE). Residues H213 and F260 each coordinate a plastoquinone. Fe cation is bound at residue H213. Residue H267 coordinates Fe cation. Residues 277–293 (GLWASSIGIVGLALNLR) form a helical membrane-spanning segment.

It belongs to the reaction center PufL/M/PsbA/D family. In terms of assembly, PSII is composed of 1 copy each of membrane proteins PsbA, PsbB, PsbC, PsbD, PsbE, PsbF, PsbH, PsbI, PsbJ, PsbK, PsbL, PsbM, PsbT, PsbX, PsbY, PsbZ, Psb30/Ycf12, at least 3 peripheral proteins of the oxygen-evolving complex and a large number of cofactors. It forms dimeric complexes. Requires The D1/D2 heterodimer binds P680, chlorophylls that are the primary electron donor of PSII, and subsequent electron acceptors. It shares a non-heme iron and each subunit binds pheophytin, quinone, additional chlorophylls, carotenoids and lipids. There is also a Cl(-1) ion associated with D1 and D2, which is required for oxygen evolution. The PSII complex binds additional chlorophylls, carotenoids and specific lipids. as cofactor.

Its subcellular location is the plastid. It localises to the chloroplast thylakoid membrane. The enzyme catalyses 2 a plastoquinone + 4 hnu + 2 H2O = 2 a plastoquinol + O2. In terms of biological role, photosystem II (PSII) is a light-driven water:plastoquinone oxidoreductase that uses light energy to abstract electrons from H(2)O, generating O(2) and a proton gradient subsequently used for ATP formation. It consists of a core antenna complex that captures photons, and an electron transfer chain that converts photonic excitation into a charge separation. The D1/D2 (PsbA/PsbD) reaction center heterodimer binds P680, the primary electron donor of PSII as well as several subsequent electron acceptors. D2 is needed for assembly of a stable PSII complex. This chain is Photosystem II D2 protein, found in Cyanidioschyzon merolae (strain NIES-3377 / 10D) (Unicellular red alga).